The chain runs to 93 residues: DNA-binding protein HB1 (93 aa).

Belongs to the bacterial histone-like protein family. As to quaternary structure, homodimer.

Histone-like DNA-binding protein which is capable of wrapping DNA to stabilize it, and thus to prevent its denaturation under extreme environmental conditions. This is DNA-binding protein HB1 (hup) from Bifidobacterium longum (strain NCC 2705).